Reading from the N-terminus, the 329-residue chain is Malate dehydrogenase (329 aa).

12 to 18 (GAAGQIG) lines the NAD(+) pocket. Substrate is bound by residues arginine 93 and arginine 99. NAD(+)-binding positions include asparagine 106, glutamine 113, and 130 to 132 (TGN). Substrate-binding residues include asparagine 132 and arginine 163. The active-site Proton acceptor is the histidine 188.

It belongs to the LDH/MDH superfamily. MDH type 2 family.

The enzyme catalyses (S)-malate + NAD(+) = oxaloacetate + NADH + H(+). Catalyzes the reversible oxidation of malate to oxaloacetate. This Mycobacterium ulcerans (strain Agy99) protein is Malate dehydrogenase.